A 272-amino-acid polypeptide reads, in one-letter code: ATP synthase subunit a (272 aa).

6 helical membrane passes run 42–62, 108–128, 140–162, 177–197, 219–239, and 241–261; these read IDSL…AGFV, FVWI…LPCI, ILPS…LMIF, LIYH…LEII, LIFI…LSVP, and AIFH…LTII.

It belongs to the ATPase A chain family. As to quaternary structure, F-type ATPases have 2 components, CF(1) - the catalytic core - and CF(0) - the membrane proton channel. CF(1) has five subunits: alpha(3), beta(3), gamma(1), delta(1), epsilon(1). CF(0) has three main subunits: a(1), b(2) and c(9-12). The alpha and beta chains form an alternating ring which encloses part of the gamma chain. CF(1) is attached to CF(0) by a central stalk formed by the gamma and epsilon chains, while a peripheral stalk is formed by the delta and b chains.

It localises to the cell inner membrane. In terms of biological role, key component of the proton channel; it plays a direct role in the translocation of protons across the membrane. The protein is ATP synthase subunit a of Blochmanniella floridana.